We begin with the raw amino-acid sequence, 478 residues long: Quinoprotein glucose dehydrogenase B (478 aa).

Residues methionine 1–alanine 24 form the signal peptide. 2 residues coordinate D-glucose: glutamine 100 and aspartate 167. Histidine 168 functions as the Proton acceptor in the catalytic mechanism. 2 residues coordinate D-glucose: glutamine 192 and arginine 252. Residues arginine 252–asparagine 253 are PQQ. Residues glycine 271, proline 272, glutamate 277, tyrosine 287, alanine 293, tyrosine 295, aspartate 297, and glutamate 333 each coordinate Ca(2+). Residues tyrosine 367, threonine 372, and lysine 401 each contribute to the pyrroloquinoline quinone site. A PQQ region spans residues arginine 430–arginine 432.

It belongs to the PQQ oxidoreductase GdhB family. In terms of assembly, homodimer. Pyrroloquinoline quinone is required as a cofactor. It depends on Ca(2+) as a cofactor.

The catalysed reaction is a ubiquinone + D-glucose = D-glucono-1,5-lactone + a ubiquinol. Functionally, oxidizes glucose to gluconolactone. This chain is Quinoprotein glucose dehydrogenase B (gdhB), found in Acinetobacter calcoaceticus.